The primary structure comprises 439 residues: Glucose-6-phosphate 1-dehydrogenase (439 aa).

Residue K100 coordinates NADP(+). Positions 130, 134, 168, and 187 each coordinate substrate. The Proton acceptor role is filled by H192. K288 is a substrate binding site.

This sequence belongs to the glucose-6-phosphate dehydrogenase family.

The catalysed reaction is D-glucose 6-phosphate + NADP(+) = 6-phospho-D-glucono-1,5-lactone + NADPH + H(+). Its pathway is carbohydrate degradation; pentose phosphate pathway; D-ribulose 5-phosphate from D-glucose 6-phosphate (oxidative stage): step 1/3. Catalyzes the oxidation of glucose 6-phosphate to 6-phosphogluconolactone. This is Glucose-6-phosphate 1-dehydrogenase from Chlamydia trachomatis serovar D (strain ATCC VR-885 / DSM 19411 / UW-3/Cx).